Reading from the N-terminus, the 463-residue chain is Ribosomal protein uS12 methylthiotransferase RimO (463 aa).

The MTTase N-terminal domain maps to 15–130; it reads PKVGFVSLGC…VMQAVHSHLP (116 aa). [4Fe-4S] cluster contacts are provided by Cys-24, Cys-60, Cys-89, Cys-161, Cys-165, and Cys-168. In terms of domain architecture, Radical SAM core spans 147–392; that stretch reads LTPRHYAYLK…MEVAEQVSAK (246 aa). The TRAM domain occupies 395-463; the sequence is ARKVGKTLKV…ADGHDLWGEV (69 aa).

The protein belongs to the methylthiotransferase family. RimO subfamily. [4Fe-4S] cluster serves as cofactor.

Its subcellular location is the cytoplasm. It catalyses the reaction L-aspartate(89)-[ribosomal protein uS12]-hydrogen + (sulfur carrier)-SH + AH2 + 2 S-adenosyl-L-methionine = 3-methylsulfanyl-L-aspartate(89)-[ribosomal protein uS12]-hydrogen + (sulfur carrier)-H + 5'-deoxyadenosine + L-methionine + A + S-adenosyl-L-homocysteine + 2 H(+). Functionally, catalyzes the methylthiolation of an aspartic acid residue of ribosomal protein uS12. The polypeptide is Ribosomal protein uS12 methylthiotransferase RimO (Paraburkholderia phymatum (strain DSM 17167 / CIP 108236 / LMG 21445 / STM815) (Burkholderia phymatum)).